We begin with the raw amino-acid sequence, 108 residues long: Large ribosomal subunit protein bL31B (108 aa).

The interval 88–108 (AAVEEAPAVKSKKKAPIKKKK) is disordered. Basic residues predominate over residues 97-108 (KSKKKAPIKKKK).

It belongs to the bacterial ribosomal protein bL31 family. Type B subfamily. Part of the 50S ribosomal subunit.

The polypeptide is Large ribosomal subunit protein bL31B (Chlamydia abortus (strain DSM 27085 / S26/3) (Chlamydophila abortus)).